A 351-amino-acid chain; its full sequence is sn-glycerol-3-phosphate import ATP-binding protein UgpC (351 aa).

The 232-residue stretch at isoleucine 4–isoleucine 235 folds into the ABC transporter domain. Position 37 to 44 (glycine 37 to serine 44) interacts with ATP.

Belongs to the ABC transporter superfamily. sn-glycerol-3-phosphate importer (TC 3.A.1.1.3) family. In terms of assembly, the complex is composed of two ATP-binding proteins (UgpC), two transmembrane proteins (UgpA and UgpE) and a solute-binding protein (UgpB).

Its subcellular location is the cell inner membrane. The enzyme catalyses sn-glycerol 3-phosphate(out) + ATP + H2O = sn-glycerol 3-phosphate(in) + ADP + phosphate + H(+). Functionally, part of the ABC transporter complex UgpBAEC involved in sn-glycerol-3-phosphate (G3P) import. Responsible for energy coupling to the transport system. In Brucella abortus (strain 2308), this protein is sn-glycerol-3-phosphate import ATP-binding protein UgpC.